Reading from the N-terminus, the 623-residue chain is uncharacterized protein (623 aa).

5 helical membrane-spanning segments follow: residues 242–262 (IVLA…ITWL), 288–308 (IVSP…LDIF), 318–338 (VSMW…IALF), 361–381 (VINL…LLGV), and 387–407 (FNVS…ALAV).

This sequence belongs to the MscS (TC 1.A.23) family.

It localises to the cell membrane. This is an uncharacterized protein from Helicobacter pylori (strain ATCC 700392 / 26695) (Campylobacter pylori).